Reading from the N-terminus, the 264-residue chain is Protein hob3 (264 aa).

In terms of domain architecture, BAR spans 17 to 237 (VMMKTGHVER…FDNSVREDYS (221 aa)). Coiled coils occupy residues 25–65 (ERTV…AMTA) and 165–187 (RTEK…LVSE).

It localises to the cytoplasm. It is found in the cytoskeleton. In terms of biological role, involved in cytokinesis and septation where it has a role in the localization of F-actin. The polypeptide is Protein hob3 (hob3) (Schizosaccharomyces pombe (strain 972 / ATCC 24843) (Fission yeast)).